Reading from the N-terminus, the 216-residue chain is 3-isopropylmalate dehydratase small subunit (216 aa).

This sequence belongs to the LeuD family. LeuD type 1 subfamily. Heterodimer of LeuC and LeuD.

The enzyme catalyses (2R,3S)-3-isopropylmalate = (2S)-2-isopropylmalate. The protein operates within amino-acid biosynthesis; L-leucine biosynthesis; L-leucine from 3-methyl-2-oxobutanoate: step 2/4. In terms of biological role, catalyzes the isomerization between 2-isopropylmalate and 3-isopropylmalate, via the formation of 2-isopropylmaleate. The polypeptide is 3-isopropylmalate dehydratase small subunit (Bordetella avium (strain 197N)).